The primary structure comprises 408 residues: Peptidase T (408 aa).

Zn(2+) is bound at residue H78. D80 is a catalytic residue. D140 is a binding site for Zn(2+). E173 serves as the catalytic Proton acceptor. Zn(2+) is bound by residues E174, D196, and H379.

It belongs to the peptidase M20B family. The cofactor is Zn(2+).

The protein localises to the cytoplasm. The catalysed reaction is Release of the N-terminal residue from a tripeptide.. Its function is as follows. Cleaves the N-terminal amino acid of tripeptides. The protein is Peptidase T of Escherichia coli O6:K15:H31 (strain 536 / UPEC).